A 295-amino-acid chain; its full sequence is Phosphoserine phosphatase, chloroplastic (295 aa).

The transit peptide at 1–54 directs the protein to the chloroplast; sequence MEALTTSRVVPVQVPCRKLSSLFANFSCLELRRYPCRGLVSIMNHPKLLRPVTA. Asp89 acts as the Nucleophile in catalysis. 2 residues coordinate Mg(2+): Asp89 and Asp91. Residue Asp91 is the Proton donor of the active site. Residues Glu98, Arg134, 178–179, and Lys227 contribute to the substrate site; that span reads SG. Asp248 contacts Mg(2+).

It belongs to the HAD-like hydrolase superfamily. SerB family. Mg(2+) serves as cofactor. As to expression, ubiquitous. Mainly expressed in shoot and root meristems, vasculature, pollen, anthers, carpels and seeds.

The protein resides in the plastid. Its subcellular location is the chloroplast. The catalysed reaction is O-phospho-L-serine + H2O = L-serine + phosphate. It catalyses the reaction O-phospho-D-serine + H2O = D-serine + phosphate. The protein operates within amino-acid biosynthesis; L-serine biosynthesis; L-serine from 3-phospho-D-glycerate: step 3/3. Approximately 60% inhibition of PSP activity is observed in presence of 10 mM serine. Its function is as follows. Catalyzes the last step in the plastidial phosphorylated pathway of serine biosynthesis (PPSB). The reaction mechanism proceeds via the formation of a phosphoryl-enzyme intermediates. Required for embryo, pollen and root development. May be required preferentially for serine biosynthesis in non-photosynthetic tissues. The chain is Phosphoserine phosphatase, chloroplastic (PSP) from Arabidopsis thaliana (Mouse-ear cress).